The following is a 592-amino-acid chain: 2-succinyl-5-enolpyruvyl-6-hydroxy-3-cyclohexene-1-carboxylate synthase (592 aa).

This sequence belongs to the TPP enzyme family. MenD subfamily. Homodimer. It depends on Mg(2+) as a cofactor. Mn(2+) serves as cofactor. The cofactor is thiamine diphosphate.

The enzyme catalyses isochorismate + 2-oxoglutarate + H(+) = 5-enolpyruvoyl-6-hydroxy-2-succinyl-cyclohex-3-ene-1-carboxylate + CO2. It functions in the pathway quinol/quinone metabolism; 1,4-dihydroxy-2-naphthoate biosynthesis; 1,4-dihydroxy-2-naphthoate from chorismate: step 2/7. The protein operates within quinol/quinone metabolism; menaquinone biosynthesis. Its function is as follows. Catalyzes the thiamine diphosphate-dependent decarboxylation of 2-oxoglutarate and the subsequent addition of the resulting succinic semialdehyde-thiamine pyrophosphate anion to isochorismate to yield 2-succinyl-5-enolpyruvyl-6-hydroxy-3-cyclohexene-1-carboxylate (SEPHCHC). This chain is 2-succinyl-5-enolpyruvyl-6-hydroxy-3-cyclohexene-1-carboxylate synthase, found in Haloarcula marismortui (strain ATCC 43049 / DSM 3752 / JCM 8966 / VKM B-1809) (Halobacterium marismortui).